The primary structure comprises 522 residues: MKNLNRILLSIKFMNKYFTYLIAIISGLLGVFAFSPFDYWPLAYVSLLGLLYVAKNPKKSTALLSTFLWAMGFFCFGVSWLNVSIHQFGGASLGVSYFLVGLLAAYLALYPMLFTYLVHHFKVQSAVIFAVIWTLTEFLRGWIFTGFPWLQFGYTQIDSPFYGIAPIFGVTGLTFFTVWASAVIFNLVSSLFKTKNLKLVLANALLLIIVGGLSAYSSRIHFVKSVEDKAISVTLAQGNIEQNLKWDPNYFYSTLAIYQKLITENLGKTDLIILPESALPTLENAITPFFEGLERAAKETKTEIMVGTVFQDTKSGKLLNSIMTAGNPDFPYQPNTQNRYNKHHLVPFGEYVPLESILRPLNSVFNLPMSAFQSGEAVQPSLIAKKRAFSPAICYEIIFGEQVRQNLKQDTDYLLTLSNDAWFGDSIGPWQHLQMARMRALELGKPLIRATNTGISVFVDAQGKVLAQAPQFIETTLTYKIAPAEGKTPYSVLGNMPLYALSLLFLLLHSMMAFIRRKMNIL.

Helical transmembrane passes span 17–37, 61–81, 98–118, 127–147, 164–184, and 197–217; these read YFTY…FSPF, TALL…VSWL, FLVG…TYLV, VIFA…FTGF, IAPI…SAVI, and LKLV…SAYS. Residues 236–483 enclose the CN hydrolase domain; sequence AQGNIEQNLK…ETTLTYKIAP (248 aa). Catalysis depends on Glu-276, which acts as the Proton acceptor. Residue Lys-342 is part of the active site. Cys-394 (nucleophile) is an active-site residue. Residues 495–515 form a helical membrane-spanning segment; that stretch reads NMPLYALSLLFLLLHSMMAFI.

The protein belongs to the CN hydrolase family. Apolipoprotein N-acyltransferase subfamily.

The protein resides in the cell inner membrane. The catalysed reaction is N-terminal S-1,2-diacyl-sn-glyceryl-L-cysteinyl-[lipoprotein] + a glycerophospholipid = N-acyl-S-1,2-diacyl-sn-glyceryl-L-cysteinyl-[lipoprotein] + a 2-acyl-sn-glycero-3-phospholipid + H(+). Its pathway is protein modification; lipoprotein biosynthesis (N-acyl transfer). Functionally, catalyzes the phospholipid dependent N-acylation of the N-terminal cysteine of apolipoprotein, the last step in lipoprotein maturation. This Haemophilus influenzae (strain ATCC 51907 / DSM 11121 / KW20 / Rd) protein is Apolipoprotein N-acyltransferase.